A 1576-amino-acid polypeptide reads, in one-letter code: eIF-2-alpha kinase GCN2 (1576 aa).

The RWD domain maps to 16 to 127 (NEIEALKAIF…SIVQDYLNDW (112 aa)). Residues 180 to 204 (QDELQRRSYETPQSSSKKKTNSKET) are disordered. Protein kinase domains follow at residues 235–511 (VLPL…HVIR) and 556–928 (FEEL…EEFI). Residues 562-570 (LGRGGFGEV) and lysine 585 each bind ATP. A disordered region spans residues 673–714 (YNSSADEEDPEASDISFQYSNTSDKEGSSDKDSSIEEASSVK). Over residues 695–706 (SDKEGSSDKDSS) the composition is skewed to basic and acidic residues. Aspartate 772 (proton acceptor) is an active-site residue.

The protein belongs to the protein kinase superfamily. Ser/Thr protein kinase family. GCN2 subfamily. In terms of assembly, homodimer; homodimerization is important for kinase activation by uncharged tRNAs. Interacts (via N-terminal RWD domain) with gcn1 (via N- and C-terminus); this interaction stimulates gcn2 kinase activity in a gcn20-dependent manner in response to amino acid starvation. Interacts (via N-terminus) with the gcn1-gcn20 complex on translating ribosomes in amino acid-starved cells; gcn1 may bind near the ribosomal A-site and promotes the transfer of uncharged tRNAs from the A-site to the tRNA-binding domain in gcn2 for its subsequent kinase activation, and hence allowing fil1 translational activation and derepression of amino acid biosynthetic genes. Autophosphorylated.

The protein localises to the cytoplasm. The catalysed reaction is L-seryl-[protein] + ATP = O-phospho-L-seryl-[protein] + ADP + H(+). It catalyses the reaction L-threonyl-[protein] + ATP = O-phospho-L-threonyl-[protein] + ADP + H(+). The integrated stress response (ISR) is activated in response to conditions that promote ribosome collisions: gcn1, which acts as a ribosome collision sensor, activates gcn2. The RQC pathway and the integrated stress response (ISR) antagonize each other: hel2 prevents the activation of gcn2, while gcn2 suppresses RQC activation. Ribosome stalling-induced integrated stress response prefers ribosomes with empty A sites. The kinase activity is stimulated upon binding to uncharged tRNAs. Metabolic-stress sensing protein kinase that phosphorylates the alpha subunit of eukaryotic translation initiation factor 2 (eIF-2-alpha/SUI2) on 'Ser-52' in response to low amino acid, carbon, or purine availability. Required for adapatation to nutrient starvation by acting as a key component of the integrated stress response (ISR), by which cells alter their translational and transcriptional output in response to starvation. Converts phosphorylated eIF-2-alpha/SUI2 either to a competitive inhibitor of translation initiation factor eIF-2B, leading to a global protein synthesis repression, and thus to a reduced overall utilization of amino acids, or to a translational initiation activation of specific mRNAs, such as the transcriptional activator GCN4, and hence allowing GCN4-mediated reprogramming of transcription to alleviate nutrient depletion. Binds uncharged tRNAs. This Schizosaccharomyces pombe (strain 972 / ATCC 24843) (Fission yeast) protein is eIF-2-alpha kinase GCN2.